The following is a 284-amino-acid chain: Prolyl 4-hydroxylase subunit alpha (284 aa).

One can recognise a Fe2OG dioxygenase domain in the interval 169–284; the sequence is NFNSIKTQTQ…PRIAITTWIY (116 aa). Fe cation is bound by residues His191, Asp193, and His266. Arg276 contacts 2-oxoglutarate.

Belongs to the P4HA family. As to quaternary structure, heterotetramer of two alpha-1 chains and two beta chains (the beta chain is the multi-functional PDI). Fe(2+) is required as a cofactor. L-ascorbate serves as cofactor.

It is found in the cytoplasm. The catalysed reaction is L-prolyl-[Skp1 protein] + 2-oxoglutarate + O2 = trans-4-hydroxy-L-prolyl-[Skp1 protein] + succinate + CO2. With respect to regulation, inhibited by the prolyl-hydroxylase inhibitors alpha,alpha'-dipyridyl and ethyl 3,4-dihydroxybenzoate. In terms of biological role, catalyzes the post-translational formation of 4-hydroxyproline. Probably hydroxylates skp1 on Pro-143. This chain is Prolyl 4-hydroxylase subunit alpha (phyA), found in Dictyostelium discoideum (Social amoeba).